The sequence spans 90 residues: U7-theraphotoxin-Hhn1j (90 aa).

A signal peptide spans 1 to 19; sequence MKTAIFTVVLALAVFAVLS. The propeptide occupies 20-50; that stretch reads FGWEANEKALSEEFTELIHEKEAASETEARE. 3 disulfides stabilise this stretch: Cys51–Cys65, Cys58–Cys70, and Cys64–Cys81.

It belongs to the neurotoxin 10 (Hwtx-1) family. 13 (Hntx-13) subfamily. Expressed by the venom gland.

It is found in the secreted. Functionally, ion channel inhibitor. In Cyriopagopus hainanus (Chinese bird spider), this protein is U7-theraphotoxin-Hhn1j.